A 456-amino-acid polypeptide reads, in one-letter code: Glutamate--tRNA ligase 1 (456 aa).

Positions 9-19 (PSPTGQIHIGN) match the 'HIGH' region motif. The 'KMSKS' region motif lies at 250–254 (GLSKR). Lys-253 contacts ATP.

The protein belongs to the class-I aminoacyl-tRNA synthetase family. Glutamate--tRNA ligase type 1 subfamily. Monomer.

It localises to the cytoplasm. It catalyses the reaction tRNA(Glu) + L-glutamate + ATP = L-glutamyl-tRNA(Glu) + AMP + diphosphate. Catalyzes the attachment of glutamate to tRNA(Glu) in a two-step reaction: glutamate is first activated by ATP to form Glu-AMP and then transferred to the acceptor end of tRNA(Glu). The chain is Glutamate--tRNA ligase 1 from Chelativorans sp. (strain BNC1).